A 79-amino-acid chain; its full sequence is MSDIEERVKKIIIEQLGVKEEEVKSEASFVDDLGADSLDTVELVMALEEEFDTEIPDEEAEKITTVQSAIDYVNAHKDA.

The Carrier domain maps to 2–77 (SDIEERVKKI…SAIDYVNAHK (76 aa)). Position 37 is an O-(pantetheine 4'-phosphoryl)serine (Ser-37).

Belongs to the acyl carrier protein (ACP) family. In terms of processing, 4'-phosphopantetheine is transferred from CoA to a specific serine of apo-ACP by AcpS. This modification is essential for activity because fatty acids are bound in thioester linkage to the sulfhydryl of the prosthetic group.

The protein localises to the cytoplasm. It participates in lipid metabolism; fatty acid biosynthesis. Carrier of the growing fatty acid chain in fatty acid biosynthesis. This Pseudoalteromonas atlantica (strain T6c / ATCC BAA-1087) protein is Acyl carrier protein.